Reading from the N-terminus, the 942-residue chain is Leucine--tRNA ligase 2 (942 aa).

The 'HIGH' region signature appears at 35–45; sequence PYPNSPFHLGH. A 'KMSKS' region motif is present at residues 619–623; it reads KMSKS. Lys622 provides a ligand contact to ATP.

The protein belongs to the class-I aminoacyl-tRNA synthetase family.

Its subcellular location is the cytoplasm. It carries out the reaction tRNA(Leu) + L-leucine + ATP = L-leucyl-tRNA(Leu) + AMP + diphosphate. The polypeptide is Leucine--tRNA ligase 2 (Sulfolobus acidocaldarius (strain ATCC 33909 / DSM 639 / JCM 8929 / NBRC 15157 / NCIMB 11770)).